Reading from the N-terminus, the 36-residue chain is Photosystem I reaction center subunit VIII (36 aa).

A helical membrane pass occupies residues 9 to 29 (IFVPLVGLVFPAIAMASLSLY).

This sequence belongs to the PsaI family.

Its subcellular location is the plastid. It is found in the chloroplast thylakoid membrane. Its function is as follows. May help in the organization of the PsaL subunit. The protein is Photosystem I reaction center subunit VIII of Phalaenopsis aphrodite subsp. formosana (Moth orchid).